The sequence spans 203 residues: Histidine biosynthesis bifunctional protein HisIE (203 aa).

The phosphoribosyl-AMP cyclohydrolase stretch occupies residues 1 to 114 (MLTEQQRREL…FGDASHQWLF (114 aa)). The phosphoribosyl-ATP pyrophosphohydrolase stretch occupies residues 115 to 203 (LYQLEQLLAE…VIDDLRKRHQ (89 aa)).

In the N-terminal section; belongs to the PRA-CH family. This sequence in the C-terminal section; belongs to the PRA-PH family.

It is found in the cytoplasm. The catalysed reaction is 1-(5-phospho-beta-D-ribosyl)-ATP + H2O = 1-(5-phospho-beta-D-ribosyl)-5'-AMP + diphosphate + H(+). It catalyses the reaction 1-(5-phospho-beta-D-ribosyl)-5'-AMP + H2O = 1-(5-phospho-beta-D-ribosyl)-5-[(5-phospho-beta-D-ribosylamino)methylideneamino]imidazole-4-carboxamide. Its pathway is amino-acid biosynthesis; L-histidine biosynthesis; L-histidine from 5-phospho-alpha-D-ribose 1-diphosphate: step 2/9. The protein operates within amino-acid biosynthesis; L-histidine biosynthesis; L-histidine from 5-phospho-alpha-D-ribose 1-diphosphate: step 3/9. The chain is Histidine biosynthesis bifunctional protein HisIE (hisI) from Salmonella typhi.